We begin with the raw amino-acid sequence, 294 residues long: Lipoyl synthase 1 (294 aa).

Residues Cys-38, Cys-43, Cys-49, Cys-64, Cys-68, Cys-71, and Ser-279 each coordinate [4Fe-4S] cluster. Residues 50–268 (FAGGTATFLI…EEGQTRFGFL (219 aa)) enclose the Radical SAM core domain.

Belongs to the radical SAM superfamily. Lipoyl synthase family. Requires [4Fe-4S] cluster as cofactor.

Its subcellular location is the cytoplasm. It carries out the reaction [[Fe-S] cluster scaffold protein carrying a second [4Fe-4S](2+) cluster] + N(6)-octanoyl-L-lysyl-[protein] + 2 oxidized [2Fe-2S]-[ferredoxin] + 2 S-adenosyl-L-methionine + 4 H(+) = [[Fe-S] cluster scaffold protein] + N(6)-[(R)-dihydrolipoyl]-L-lysyl-[protein] + 4 Fe(3+) + 2 hydrogen sulfide + 2 5'-deoxyadenosine + 2 L-methionine + 2 reduced [2Fe-2S]-[ferredoxin]. It functions in the pathway protein modification; protein lipoylation via endogenous pathway; protein N(6)-(lipoyl)lysine from octanoyl-[acyl-carrier-protein]: step 2/2. Catalyzes the radical-mediated insertion of two sulfur atoms into the C-6 and C-8 positions of the octanoyl moiety bound to the lipoyl domains of lipoate-dependent enzymes, thereby converting the octanoylated domains into lipoylated derivatives. This Prochlorococcus marinus (strain SARG / CCMP1375 / SS120) protein is Lipoyl synthase 1.